The following is a 419-amino-acid chain: UDP-N-acetylglucosamine 1-carboxyvinyltransferase (419 aa).

22-23 serves as a coordination point for phosphoenolpyruvate; sequence KN. UDP-N-acetyl-alpha-D-glucosamine is bound at residue arginine 91. Catalysis depends on cysteine 115, which acts as the Proton donor. The residue at position 115 (cysteine 115) is a 2-(S-cysteinyl)pyruvic acid O-phosphothioketal. UDP-N-acetyl-alpha-D-glucosamine is bound by residues 120–124, 160–163, aspartate 305, and valine 327; these read RPVDL and KVSV.

Belongs to the EPSP synthase family. MurA subfamily.

It is found in the cytoplasm. It carries out the reaction phosphoenolpyruvate + UDP-N-acetyl-alpha-D-glucosamine = UDP-N-acetyl-3-O-(1-carboxyvinyl)-alpha-D-glucosamine + phosphate. Its pathway is cell wall biogenesis; peptidoglycan biosynthesis. Functionally, cell wall formation. Adds enolpyruvyl to UDP-N-acetylglucosamine. This is UDP-N-acetylglucosamine 1-carboxyvinyltransferase from Salmonella agona (strain SL483).